A 116-amino-acid polypeptide reads, in one-letter code: Large ribosomal subunit protein bL19 (116 aa).

The protein belongs to the bacterial ribosomal protein bL19 family.

This protein is located at the 30S-50S ribosomal subunit interface and may play a role in the structure and function of the aminoacyl-tRNA binding site. The protein is Large ribosomal subunit protein bL19 of Roseiflexus castenholzii (strain DSM 13941 / HLO8).